The primary structure comprises 326 residues: NAD-dependent protein deacylase SIR5 (326 aa).

A mitochondrion-targeting transit peptide spans 1–26; it reads MRLLRPTPRLSSIFSSKTATSNLRFF. One can recognise a Deacetylase sirtuin-type domain in the interval 28-324; it reads AMAPHNDVGA…IGKLETDKKE (297 aa). 53–72 provides a ligand contact to NAD(+); it reads GAGLSASSGLPTFRGAGGLW. The substrate site is built by tyrosine 97 and arginine 100. The active-site Proton acceptor is the histidine 151. The Zn(2+) site is built by cysteine 159, cysteine 162, cysteine 211, and cysteine 214.

It belongs to the sirtuin family. Class I subfamily. As to quaternary structure, interacts with LAT1; the interaction is direct. Requires Zn(2+) as cofactor.

Its subcellular location is the mitochondrion. The protein localises to the cytoplasm. The protein resides in the cytosol. It is found in the nucleus. It localises to the chromosome. The enzyme catalyses N(6)-acetyl-L-lysyl-[protein] + NAD(+) + H2O = 2''-O-acetyl-ADP-D-ribose + nicotinamide + L-lysyl-[protein]. It catalyses the reaction N(6)-(2E)-butenoyl-L-lysyl-[protein] + H2O = (2E)-2-butenoate + L-lysyl-[protein]. Functionally, NAD-dependent protein-lysine deacylase that decrotonylates the PDC (pyruvate dehydrogenase complex) subunit LAT1 at 'Lys-148' to inhibit PDC activity and consequently ATP production. Also decrotonylates histone H3 crotonylated at 'Lys-18' (H3K18cr), to repress the expression of genes involved in aerobic respiration. May also act as a NAD-dependent deacetylase. Does not mediate desuccinylation, demalonylation, or deglutarylation of LAT1. In Fusarium oxysporum f. sp. lycopersici (strain 4287 / CBS 123668 / FGSC 9935 / NRRL 34936) (Fusarium vascular wilt of tomato), this protein is NAD-dependent protein deacylase SIR5.